We begin with the raw amino-acid sequence, 163 residues long: MFKTYSKSFACILFCIFNIFVVSASAIDLDEATRTVVTDSSGNTTVLTPEQVKRGKRLFNATCGACHTGGITKTNPNVGLDPEALSLATPRRDNISALVDYLKNPTTYDGLESIAEIHPSIKSADIYPRMRSLTDEDLYSIAGHIMLQPKIVAEKWGGGKIYF.

Residues 1–26 form the signal peptide; sequence MFKTYSKSFACILFCIFNIFVVSASA. Heme c contacts are provided by Cys-63, Cys-66, His-67, and Met-130.

This sequence belongs to the cytochrome c family. PsbV subfamily. In terms of assembly, PSII is composed of 1 copy each of membrane proteins PsbA, PsbB, PsbC, PsbD, PsbE, PsbF, PsbH, PsbI, PsbJ, PsbK, PsbL, PsbM, PsbT, PsbY, PsbZ, Psb30/Ycf12, at least 3 peripheral proteins of the oxygen-evolving complex and a large number of cofactors. It forms dimeric complexes. Requires heme c as cofactor.

Its subcellular location is the plastid. It is found in the chloroplast thylakoid membrane. One of the extrinsic, lumenal subunits of photosystem II (PSII). PSII is a light-driven water plastoquinone oxidoreductase, using light energy to abstract electrons from H(2)O, generating a proton gradient subsequently used for ATP formation. The extrinsic proteins stabilize the structure of photosystem II oxygen-evolving complex (OEC), the ion environment of oxygen evolution and protect the OEC against heat-induced inactivation. The polypeptide is Photosystem II extrinsic protein V (Thalassiosira pseudonana (Marine diatom)).